A 375-amino-acid polypeptide reads, in one-letter code: Queuine tRNA-ribosyltransferase (375 aa).

Catalysis depends on aspartate 89, which acts as the Proton acceptor. Substrate is bound by residues 89 to 93 (DSGGF), aspartate 143, glutamine 187, and glycine 214. The segment at 245-251 (GVGKPED) is RNA binding. Aspartate 264 functions as the Nucleophile in the catalytic mechanism. Residues 269–273 (TRNAR) form an RNA binding; important for wobble base 34 recognition region. Residues cysteine 302, cysteine 304, cysteine 307, and histidine 333 each contribute to the Zn(2+) site.

Belongs to the queuine tRNA-ribosyltransferase family. In terms of assembly, homodimer. Within each dimer, one monomer is responsible for RNA recognition and catalysis, while the other monomer binds to the replacement base PreQ1. Requires Zn(2+) as cofactor.

The catalysed reaction is 7-aminomethyl-7-carbaguanine + guanosine(34) in tRNA = 7-aminomethyl-7-carbaguanosine(34) in tRNA + guanine. Its pathway is tRNA modification; tRNA-queuosine biosynthesis. Functionally, catalyzes the base-exchange of a guanine (G) residue with the queuine precursor 7-aminomethyl-7-deazaguanine (PreQ1) at position 34 (anticodon wobble position) in tRNAs with GU(N) anticodons (tRNA-Asp, -Asn, -His and -Tyr). Catalysis occurs through a double-displacement mechanism. The nucleophile active site attacks the C1' of nucleotide 34 to detach the guanine base from the RNA, forming a covalent enzyme-RNA intermediate. The proton acceptor active site deprotonates the incoming PreQ1, allowing a nucleophilic attack on the C1' of the ribose to form the product. After dissociation, two additional enzymatic reactions on the tRNA convert PreQ1 to queuine (Q), resulting in the hypermodified nucleoside queuosine (7-(((4,5-cis-dihydroxy-2-cyclopenten-1-yl)amino)methyl)-7-deazaguanosine). The sequence is that of Queuine tRNA-ribosyltransferase from Salmonella arizonae (strain ATCC BAA-731 / CDC346-86 / RSK2980).